The primary structure comprises 479 residues: Glutamyl-tRNA(Gln) amidotransferase subunit A (479 aa).

Catalysis depends on charge relay system residues lysine 74 and serine 149. Residue serine 173 is the Acyl-ester intermediate of the active site.

The protein belongs to the amidase family. GatA subfamily. In terms of assembly, heterotrimer of A, B and C subunits.

It carries out the reaction L-glutamyl-tRNA(Gln) + L-glutamine + ATP + H2O = L-glutaminyl-tRNA(Gln) + L-glutamate + ADP + phosphate + H(+). Allows the formation of correctly charged Gln-tRNA(Gln) through the transamidation of misacylated Glu-tRNA(Gln) in organisms which lack glutaminyl-tRNA synthetase. The reaction takes place in the presence of glutamine and ATP through an activated gamma-phospho-Glu-tRNA(Gln). In Cenarchaeum symbiosum (strain A), this protein is Glutamyl-tRNA(Gln) amidotransferase subunit A.